Here is a 520-residue protein sequence, read N- to C-terminus: Na(+)/H(+) antiporter NhaB (520 aa).

12 consecutive transmembrane segments (helical) span residues 27–49 (GFLI…LLVI), 62–82 (YPLL…MTSA), 97–117 (LLLI…LLIF), 120–140 (LLLG…AAAF), 144–164 (FLDA…FYGI), 202–222 (LMMH…VGEP), 238–258 (FLLR…VTCI), 303–323 (GLIG…VGLI), 348–368 (TEAL…AVII), 391–411 (LFYL…VGTV), 447–467 (ATPN…APLI), and 475–495 (VWMA…CVQF).

It belongs to the NhaB Na(+)/H(+) (TC 2.A.34) antiporter family.

It localises to the cell inner membrane. It catalyses the reaction 2 Na(+)(in) + 3 H(+)(out) = 2 Na(+)(out) + 3 H(+)(in). Na(+)/H(+) antiporter that extrudes sodium in exchange for external protons. In Cronobacter sakazakii (strain ATCC BAA-894) (Enterobacter sakazakii), this protein is Na(+)/H(+) antiporter NhaB.